An 89-amino-acid chain; its full sequence is Small ribosomal subunit protein uS15 (89 aa).

It belongs to the universal ribosomal protein uS15 family. Part of the 30S ribosomal subunit. Forms a bridge to the 50S subunit in the 70S ribosome, contacting the 23S rRNA.

One of the primary rRNA binding proteins, it binds directly to 16S rRNA where it helps nucleate assembly of the platform of the 30S subunit by binding and bridging several RNA helices of the 16S rRNA. In terms of biological role, forms an intersubunit bridge (bridge B4) with the 23S rRNA of the 50S subunit in the ribosome. This Limosilactobacillus reuteri (strain DSM 20016) (Lactobacillus reuteri) protein is Small ribosomal subunit protein uS15.